We begin with the raw amino-acid sequence, 366 residues long: Chorismate synthase (366 aa).

Residue Arg-48 participates in NADP(+) binding. FMN is bound by residues 125–127 (RSS), 241–242 (NA), Gly-285, 300–304 (KPTSS), and Arg-326.

It belongs to the chorismate synthase family. In terms of assembly, homotetramer. Requires FMNH2 as cofactor.

The catalysed reaction is 5-O-(1-carboxyvinyl)-3-phosphoshikimate = chorismate + phosphate. It functions in the pathway metabolic intermediate biosynthesis; chorismate biosynthesis; chorismate from D-erythrose 4-phosphate and phosphoenolpyruvate: step 7/7. In terms of biological role, catalyzes the anti-1,4-elimination of the C-3 phosphate and the C-6 proR hydrogen from 5-enolpyruvylshikimate-3-phosphate (EPSP) to yield chorismate, which is the branch point compound that serves as the starting substrate for the three terminal pathways of aromatic amino acid biosynthesis. This reaction introduces a second double bond into the aromatic ring system. This is Chorismate synthase from Paracoccus denitrificans (strain Pd 1222).